Here is a 105-residue protein sequence, read N- to C-terminus: Delta-hexatoxin-Mg1a (105 aa).

Positions 1–18 are cleaved as a signal peptide; it reads MKTLVIACVALVLVVVHG. A propeptide spanning residues 19 to 60 is cleaved from the precursor; sequence EVIEEVNEKQLQESVEEKYSLLQRLEKLDEAITAEENRNSRV. Intrachain disulfides connect C63–C77, C70–C82, C76–C93, and C78–C105.

It belongs to the neurotoxin 06 (delta-actx) family. In terms of tissue distribution, expressed by the venom gland.

It localises to the secreted. In terms of biological role, selectively slows channel inactivation of mammalian Nav1.1/SCN1A, Nav1.3/SCN3A, and Nav1.6/SCN8A and shows higher affinity for insect Nav1/para channels (site 3). Induces tonic repetitive firing of nerve impulses in insect neurons accompanied by plateau potentials. The chain is Delta-hexatoxin-Mg1a from Macrothele gigas (Japanese funnel web spider).